The chain runs to 785 residues: Mitochondrial intermediate peptidase (785 aa).

Residues 1–26 (MLKVTTSRPWVCSRCVRRQVQSRRRL) constitute a mitochondrion transit peptide. The segment at 26-51 (LATASTQYRESRPVPVDNSAPGAKRD) is disordered. Residue His-566 coordinates Zn(2+). Glu-567 is an active-site residue. Residues His-570 and His-573 each contribute to the Zn(2+) site.

The protein belongs to the peptidase M3 family. Zn(2+) serves as cofactor.

Its subcellular location is the mitochondrion matrix. It catalyses the reaction Release of an N-terminal octapeptide as second stage of processing of some proteins imported into the mitochondrion.. Its function is as follows. Cleaves proteins, imported into the mitochondrion, to their mature size. While most mitochondrial precursor proteins are processed to the mature form in one step by mitochondrial processing peptidase (MPP), the sequential cleavage by MIP of an octapeptide after initial processing by MPP is a required step for a subgroup of nuclear-encoded precursor proteins destined for the matrix or the inner membrane. In Botryotinia fuckeliana (strain B05.10) (Noble rot fungus), this protein is Mitochondrial intermediate peptidase (oct1).